We begin with the raw amino-acid sequence, 179 residues long: Inner membrane-spanning protein YciB (179 aa).

The next 5 helical transmembrane spans lie at 3-23, 49-69, 76-96, 121-141, and 149-169; these read FLFDLFPVILFFVAFKLFGIY, PMQWVSLAIIAVFGGATILLH, WKPTVLYWLFAVTLIGSVIGW, VAWAGFFAVMGVLNLYVAYQF, and FKLFGSMGLMLVFIVAQSIWL.

The protein belongs to the YciB family.

The protein resides in the cell inner membrane. Plays a role in cell envelope biogenesis, maintenance of cell envelope integrity and membrane homeostasis. In Cupriavidus metallidurans (strain ATCC 43123 / DSM 2839 / NBRC 102507 / CH34) (Ralstonia metallidurans), this protein is Inner membrane-spanning protein YciB.